Here is a 428-residue protein sequence, read N- to C-terminus: Dihydroorotase (428 aa).

Histidine 59 and histidine 61 together coordinate Zn(2+). Residues 61–63 and asparagine 93 each bind substrate; that span reads HLR. Zn(2+) is bound by residues aspartate 151, histidine 178, and histidine 231. Position 277 (asparagine 277) interacts with substrate. A Zn(2+)-binding site is contributed by aspartate 304. The active site involves aspartate 304. Substrate contacts are provided by residues histidine 308 and 322 to 323; that span reads FG.

Belongs to the metallo-dependent hydrolases superfamily. DHOase family. Class I DHOase subfamily. The cofactor is Zn(2+).

It carries out the reaction (S)-dihydroorotate + H2O = N-carbamoyl-L-aspartate + H(+). It functions in the pathway pyrimidine metabolism; UMP biosynthesis via de novo pathway; (S)-dihydroorotate from bicarbonate: step 3/3. In terms of biological role, catalyzes the reversible cyclization of carbamoyl aspartate to dihydroorotate. This chain is Dihydroorotase, found in Bacillus cereus (strain ATCC 10987 / NRS 248).